The following is an 822-amino-acid chain: Lysine-specific histone demethylase 2 (822 aa).

Positions methionine 1–lysine 11 are enriched in basic residues. A disordered region spans residues methionine 1 to glutamate 47. Serine 13, serine 17, and serine 26 each carry phosphoserine. Zn(2+)-binding residues include cysteine 53, cysteine 58, cysteine 65, cysteine 73, histidine 84, histidine 90, cysteine 92, cysteine 95, cysteine 142, cysteine 147, cysteine 169, and cysteine 185. The CW-type zinc finger occupies aspartate 133–valine 193. Serine 247 carries the post-translational modification Phosphoserine. Residues tyrosine 273 to aspartate 292 are GLYR1-binding. Residues proline 275–glutamine 373 enclose the SWIRM domain. Residue lysine 383–valine 439 coordinates FAD. Histone H3-binding regions lie at residues isoleucine 438 to leucine 467, phenylalanine 487 to arginine 498, and phenylalanine 538 to histidine 572. The interval phenylalanine 564–alanine 566 is GLYR1-binding. FAD is bound by residues valine 598, glutamate 795, and glutamine 803–valine 805. The tract at residues asparagine 798 to arginine 814 is GLYR1-binding.

This sequence belongs to the flavin monoamine oxidase family. In terms of assembly, interacts with its cofactor GLYR1 at nucleosomes; this interaction stimulates H3K4me1 and H3K4me2 demethylation. In contrast to KDM1A, does not form a complex with RCOR1/CoREST. Possible accessory component of the polycomb repressive deubiquitinase (PR-DUB) complex, at least composed of BAP1, one of ASXL1, ASXL2 or (probably) ASXL3 and one of MBD5 or MBD6. The PR-DUB core associates with a number of accessory proteins, including FOXK1, FOXK2, KDM1B, HCFC1 and OGT; KDM1B specifically associates with ASXL2 PR-DUB complexes. FAD is required as a cofactor. Requires Zn(2+) as cofactor.

Its subcellular location is the nucleus. The protein localises to the chromosome. It carries out the reaction N(6),N(6)-dimethyl-L-lysyl(4)-[histone H3] + 2 A + 2 H2O = L-lysyl(4)-[histone H3] + 2 formaldehyde + 2 AH2. The enzyme catalyses N(6)-methyl-L-lysyl(4)-[histone H3] + A + H2O = L-lysyl(4)-[histone H3] + formaldehyde + AH2. With respect to regulation, histone H3K4me1 and H3K4me2 demethylase activity is inhibited by DNA, this inhibition is released in complex with GLYR1. Functionally, histone demethylase that demethylates 'Lys-4' of histone H3, a specific tag for epigenetic transcriptional activation, thereby acting as a corepressor. Required for de novo DNA methylation of a subset of imprinted genes during oogenesis. Acts by oxidizing the substrate by FAD to generate the corresponding imine that is subsequently hydrolyzed. Demethylates both mono- and di-methylated 'Lys-4' of histone H3. Has no effect on tri-methylated 'Lys-4', mono-, di- or tri-methylated 'Lys-9', mono-, di- or tri-methylated 'Lys-27', mono-, di- or tri-methylated 'Lys-36' of histone H3, or on mono-, di- or tri-methylated 'Lys-20' of histone H4. Alone, it is unable to demethylate H3K4me on nucleosomes and requires the presence of GLYR1 to achieve such activity, they form a multifunctional enzyme complex that modifies transcribed chromatin and facilitates Pol II transcription through nucleosomes. In Homo sapiens (Human), this protein is Lysine-specific histone demethylase 2.